A 441-amino-acid chain; its full sequence is C4-dicarboxylate transport protein (441 aa).

8 helical membrane-spanning segments follow: residues serine 9–proline 29, leucine 45–methionine 65, leucine 79–valine 99, alanine 145–leucine 165, phenylalanine 187–phenylalanine 207, leucine 220–glycine 240, isoleucine 308–threonine 328, and alanine 356–isoleucine 376.

This sequence belongs to the dicarboxylate/amino acid:cation symporter (DAACS) (TC 2.A.23) family.

Its subcellular location is the cell inner membrane. Its function is as follows. Responsible for the transport of dicarboxylates such as succinate, fumarate, and malate from the periplasm across the membrane. The polypeptide is C4-dicarboxylate transport protein (Laribacter hongkongensis (strain HLHK9)).